The chain runs to 192 residues: Inosine triphosphate pyrophosphatase (192 aa).

10-15 (TGNANK) contributes to the ITP binding site. Glu46 lines the Mg(2+) pocket. ITP is bound by residues Lys58, 74–75 (DT), Lys91, 149–152 (FGWD), Lys172, and 177–178 (HR).

This sequence belongs to the HAM1 NTPase family. As to quaternary structure, homodimer. Mg(2+) serves as cofactor. Requires Mn(2+) as cofactor.

It localises to the cytoplasm. Its subcellular location is the nucleus. It catalyses the reaction ITP + H2O = IMP + diphosphate + H(+). The enzyme catalyses dITP + H2O = dIMP + diphosphate + H(+). It carries out the reaction XTP + H2O = XMP + diphosphate + H(+). Its function is as follows. Pyrophosphatase that hydrolyzes non-canonical purine nucleotides such as inosine triphosphate (ITP), deoxyinosine triphosphate (dITP) or xanthosine 5'-triphosphate (XTP) to their respective monophosphate derivatives. The enzyme does not distinguish between the deoxy- and ribose forms. Probably excludes non-canonical purines from RNA and DNA precursor pools, thus preventing their incorporation into RNA and DNA and avoiding chromosomal lesions. In Puccinia graminis f. sp. tritici (strain CRL 75-36-700-3 / race SCCL) (Black stem rust fungus), this protein is Inosine triphosphate pyrophosphatase.